The sequence spans 236 residues: MRIFPAVDILGGRCVQLVQGKRESATAYGDPLTCARRWIDAGADALHVVNLDGAFGDSAKNADLIRGLVKETGIEIELGGGIRSVEDAARWLDTGASRIILSTFAIKEPESIRTLSQEFGSDRVMAGVDAKGGQVAIHGWQETAGDYIGWAQRFEQLGAGFLLYTNVDVEGLQGGIAAGPVRRLIGNVRIPVVVAGGVSARADVALLKESGAYGAVLGSALYSGKINLSEALEESR.

Catalysis depends on aspartate 8, which acts as the Proton acceptor. Aspartate 129 acts as the Proton donor in catalysis.

It belongs to the HisA/HisF family.

It is found in the cytoplasm. It catalyses the reaction 1-(5-phospho-beta-D-ribosyl)-5-[(5-phospho-beta-D-ribosylamino)methylideneamino]imidazole-4-carboxamide = 5-[(5-phospho-1-deoxy-D-ribulos-1-ylimino)methylamino]-1-(5-phospho-beta-D-ribosyl)imidazole-4-carboxamide. It participates in amino-acid biosynthesis; L-histidine biosynthesis; L-histidine from 5-phospho-alpha-D-ribose 1-diphosphate: step 4/9. The sequence is that of 1-(5-phosphoribosyl)-5-[(5-phosphoribosylamino)methylideneamino] imidazole-4-carboxamide isomerase from Methanoregula boonei (strain DSM 21154 / JCM 14090 / 6A8).